Consider the following 268-residue polypeptide: MAQSMLVSGANGTVAAASTSRLQPVRPTPFSRLVLSQPSSSLGRAVSVKTVALFGRSKTKAAPARKAEPKPKFKTEDGIFGTSGGIGFTKENELFVGRVAMLGFAASILGEAITGKGILAQLNLETGIPIYEAEPLLLFFILFTLLGAIGALGDRGSFVDDQPVTGLDKAVIAPGKGFRSALGLSEGGPLFGFTKANELFVGRLAQLGIAFSIIGEIITGKGALAQLNIETGVPINEIEPLVLFNVVFFFIAAINPGTGKFVSDDDEE.

The N-terminal 60 residues, 1 to 60, are a transit peptide targeting the chloroplast; sequence MAQSMLVSGANGTVAAASTSRLQPVRPTPFSRLVLSQPSSSLGRAVSVKTVALFGRSKTK. Repeat copies occupy residues 54 to 161 and 164 to 268. Transmembrane regions (helical) follow at residues 99-119, 133-153, 199-219, and 234-254; these read VAML…KGIL, AEPL…GALG, LFVG…EIIT, and PINE…IAAI.

It belongs to the ELIP/psbS family. In terms of tissue distribution, expressed at low levels in leaves (at protein level).

Its subcellular location is the plastid. It localises to the chloroplast thylakoid membrane. In terms of biological role, involved in high light-mediated energy-dependent nonphotochemical quenching (NPQ, qE) and thermal dissipation (TD) thus regulating energy conversion in photosystem II and protecting from photoinhibition. Also seems to regulate quantum yield of electron transport in fluctuating light conditions. The chain is Photosystem II 22 kDa protein 1, chloroplastic from Oryza sativa subsp. indica (Rice).